A 571-amino-acid polypeptide reads, in one-letter code: Oxysterol-binding protein 11 (571 aa).

Positions 1-73 (MSNFFKKLVK…IGEQIDTLDD (73 aa)) are disordered. Polar residues predominate over residues 33–42 (NGNQVVPDTA). Residues 43–54 (SSYSDDSNSLSD) show a composition bias toward low complexity. Positions 387-420 (YLEREENKLANKEKNKIEEREREKRKTRESRKEI) form a coiled coil.

It belongs to the OSBP family.

The chain is Oxysterol-binding protein 11 (osbK) from Dictyostelium discoideum (Social amoeba).